A 164-amino-acid polypeptide reads, in one-letter code: MAQITFKQEPITLLGSQVKTGETAPEFTLLDNDLNEVNLSTYDGQKKLISVVPSIDTGVCDQQTRKFNEEASQEDGVVLTVSVDLPFAQKRWCASNGLDNVITLSDHKDLSFGKNYGVVMEELRLLARSVFVLDKNNKVVYSEIVSEGTDFPDFESALEAYRNI.

A Thioredoxin domain is found at 18–163 (VKTGETAPEF…FESALEAYRN (146 aa)). The active-site Cysteine sulfenic acid (-SOH) intermediate is C60. Residues C60 and C93 are joined by a disulfide bond.

The protein belongs to the peroxiredoxin family. Tpx subfamily. As to quaternary structure, homodimer.

The enzyme catalyses a hydroperoxide + [thioredoxin]-dithiol = an alcohol + [thioredoxin]-disulfide + H2O. Its function is as follows. Thiol-specific peroxidase that catalyzes the reduction of hydrogen peroxide and organic hydroperoxides to water and alcohols, respectively. Plays a role in cell protection against oxidative stress by detoxifying peroxides. This Staphylococcus saprophyticus subsp. saprophyticus (strain ATCC 15305 / DSM 20229 / NCIMB 8711 / NCTC 7292 / S-41) protein is Thiol peroxidase.